A 249-amino-acid chain; its full sequence is 3-deoxy-manno-octulosonate cytidylyltransferase (249 aa).

This sequence belongs to the KdsB family.

The protein localises to the cytoplasm. It carries out the reaction 3-deoxy-alpha-D-manno-oct-2-ulosonate + CTP = CMP-3-deoxy-beta-D-manno-octulosonate + diphosphate. The protein operates within nucleotide-sugar biosynthesis; CMP-3-deoxy-D-manno-octulosonate biosynthesis; CMP-3-deoxy-D-manno-octulosonate from 3-deoxy-D-manno-octulosonate and CTP: step 1/1. Its pathway is bacterial outer membrane biogenesis; lipopolysaccharide biosynthesis. In terms of biological role, activates KDO (a required 8-carbon sugar) for incorporation into bacterial lipopolysaccharide in Gram-negative bacteria. The chain is 3-deoxy-manno-octulosonate cytidylyltransferase from Aliivibrio fischeri (strain ATCC 700601 / ES114) (Vibrio fischeri).